Reading from the N-terminus, the 274-residue chain is Thymidylate synthase (274 aa).

R21 contacts dUMP. H51 contributes to the (6R)-5,10-methylene-5,6,7,8-tetrahydrofolate binding site. 123-124 (RR) lines the dUMP pocket. C156 serves as the catalytic Nucleophile. Residues 176–179 (RSAD), N187, and 217–219 (HIY) each bind dUMP. D179 contributes to the (6R)-5,10-methylene-5,6,7,8-tetrahydrofolate binding site. A (6R)-5,10-methylene-5,6,7,8-tetrahydrofolate-binding site is contributed by S273.

It belongs to the thymidylate synthase family. Bacterial-type ThyA subfamily. As to quaternary structure, homodimer.

The protein resides in the cytoplasm. The enzyme catalyses dUMP + (6R)-5,10-methylene-5,6,7,8-tetrahydrofolate = 7,8-dihydrofolate + dTMP. Its pathway is pyrimidine metabolism; dTTP biosynthesis. In terms of biological role, catalyzes the reductive methylation of 2'-deoxyuridine-5'-monophosphate (dUMP) to 2'-deoxythymidine-5'-monophosphate (dTMP) while utilizing 5,10-methylenetetrahydrofolate (mTHF) as the methyl donor and reductant in the reaction, yielding dihydrofolate (DHF) as a by-product. This enzymatic reaction provides an intracellular de novo source of dTMP, an essential precursor for DNA biosynthesis. The chain is Thymidylate synthase from Francisella tularensis subsp. novicida (strain U112).